An 86-amino-acid chain; its full sequence is Cyclin-dependent kinase inhibitor 6 (86 aa).

Residues 1 to 15 (MAAAAATVTAVQPAA) are compositionally biased toward low complexity. The interval 1–23 (MAAAAATVTAVQPAASSCGKRDG) is disordered.

Belongs to the CDI family. ICK/KRP subfamily.

This Oryza sativa subsp. japonica (Rice) protein is Cyclin-dependent kinase inhibitor 6 (KRP6).